A 393-amino-acid polypeptide reads, in one-letter code: MAPSQLAWLLRLAAFFHLCTLLAGQHLGMTKCNITCHKMTSPIPVTLLIHYQLNQESCGKRAIILETRQHRHFCADPKEKWVQDAMKHLDHQTAALTRNGGKFEKRVDNVTPRITSATRGLSPTALAKPESATVEDLTLEPTAISQEARRPMGTSQEPPAAVTGSSPSTSKAQDAGLAAKPQSTGISEVAAVSTTIWPSSAVYQSGSSLWAEEKATESPPTIALSTQASTTSSPKQNVGSEGQPPWVQEQDSTPEKSPGPEETNPVHTDIFQDRGPGSTVHPSVAPTSSEKTPSPELVASGSQAPKVEEPIHATADPQKLSVFITPVPDSQAATRRQAVGLLAFLGLLFCLGVAMFAYQSLQGCPRKMAGEMVEGLRYVPRSCGSNSYVLVPV.

The first 24 residues, 1 to 24 (MAPSQLAWLLRLAAFFHLCTLLAG), serve as a signal peptide directing secretion. The chemokine and involved in interaction with ITGAV:ITGB3 and ITGA4:ITGB1 stretch occupies residues 25-100 (QHLGMTKCNI…HQTAALTRNG (76 aa)). At 25-337 (QHLGMTKCNI…PDSQAATRRQ (313 aa)) the chain is on the extracellular side. Disulfide bonds link Cys-32–Cys-58 and Cys-36–Cys-74. The N-linked (GlcNAc...) asparagine glycan is linked to Asn-33. Residues 101–337 (GKFEKRVDNV…PDSQAATRRQ (237 aa)) are mucin-like stalk. 2 disordered regions span residues 114–184 (ITSA…PQST) and 213–303 (EKAT…SGSQ). Polar residues-rich tracts occupy residues 153–172 (GTSQ…TSKA) and 223–240 (ALST…NVGS). The helical transmembrane segment at 338-358 (AVGLLAFLGLLFCLGVAMFAY) threads the bilayer. Residues 359-393 (QSLQGCPRKMAGEMVEGLRYVPRSCGSNSYVLVPV) are Cytoplasmic-facing.

This sequence belongs to the intercrine delta family. As to quaternary structure, monomer. Forms a ternary complex with CX3CR1 and ITGAV:ITGB3 or ITGA4:ITGB1. Post-translationally, a soluble short form may be released by proteolytic cleavage from the long membrane-anchored form. In terms of tissue distribution, highest levels in brain (neurons). Significant levels in kidney, heart, lung and adrenal gland.

The protein resides in the cell membrane. It localises to the secreted. Its function is as follows. Chemokine that acts as a ligand for both CX3CR1 and integrins ITGAV:ITGB3 and ITGA4:ITGB1. The CX3CR1-CX3CL1 signaling exerts distinct functions in different tissue compartments, such as immune response, inflammation, cell adhesion and chemotaxis. Regulates leukocyte adhesion and migration processes at the endothelium. Can activate integrins in both a CX3CR1-dependent and CX3CR1-independent manner. In the presence of CX3CR1, activates integrins by binding to the classical ligand-binding site (site 1) in integrins. In the absence of CX3CR1, binds to a second site (site 2) in integrins which is distinct from site 1 and enhances the binding of other integrin ligands to site 1. Functionally, the soluble form is chemotactic for T-cells and monocytes, but not for neutrophils. The membrane-bound form promotes adhesion of those leukocytes to endothelial cells. The sequence is that of Fractalkine (Cx3cl1) from Rattus norvegicus (Rat).